The following is a 739-amino-acid chain: Disintegrin and metalloproteinase domain-containing protein 18 (739 aa).

The N-terminal stretch at 1-16 (MFLLLALLTELGRLQA) is a signal peptide. Residues 17-184 (HEGSEGIFLH…IKNLSKLLPQ (168 aa)) constitute a propeptide that is removed on maturation. Residues asparagine 36, asparagine 76, asparagine 122, asparagine 149, asparagine 156, asparagine 177, and asparagine 294 are each glycosylated (N-linked (GlcNAc...) asparagine). Residues 177–687 (NLSKLLPQYL…EKGYNTHWNN (511 aa)) are Extracellular-facing. The Peptidase M12B domain occupies 184-381 (QYLEIYIIVE…FETKCLQKLS (198 aa)). 4 cysteine pairs are disulfide-bonded: cysteine 293/cysteine 376, cysteine 335/cysteine 360, cysteine 337/cysteine 342, and cysteine 450/cysteine 471. Asparagine 359, asparagine 465, asparagine 561, asparagine 611, and asparagine 625 each carry an N-linked (GlcNAc...) asparagine glycan. The 90-residue stretch at 390–479 (QPVCGNGILE…NCVPDTYALN (90 aa)) folds into the Disintegrin domain. One can recognise an EGF-like domain in the interval 620–654 (MGYNCNATTKCKGKGICNNFGNCQCFPGHRPPDCK). 3 disulfides stabilise this stretch: cysteine 624-cysteine 636, cysteine 630-cysteine 642, and cysteine 644-cysteine 653. The helical transmembrane segment at 688–708 (WFILSFCIFLPFFIVFTTVIF) threads the bilayer. The Cytoplasmic segment spans residues 709 to 739 (KRNEISKSCNRENAEYNRNSSVVSESDDVGH).

Post-translationally, the prodomain and the metalloprotease-like domain are cleaved during the epididymal maturation of the spermatozoa. In terms of tissue distribution, expressed specifically in testis.

It is found in the membrane. Functionally, sperm surface membrane protein that may be involved in spermatogenesis and fertilization. This is a non catalytic metalloprotease-like protein. The polypeptide is Disintegrin and metalloproteinase domain-containing protein 18 (ADAM18) (Homo sapiens (Human)).